The following is a 156-amino-acid chain: uncharacterized protein (156 aa).

This is an uncharacterized protein from Bacillus subtilis (strain 168).